Here is a 405-residue protein sequence, read N- to C-terminus: Type II secretion system protein F (405 aa).

Topologically, residues 1–168 are cytoplasmic; it reads MAAFEYLALD…QRQQSRQKIQ (168 aa). The Ca(2+) site is built by Thr97, Glu151, and Asp155. Residues 169-189 traverse the membrane as a helical segment; that stretch reads LALLYPVILMVASLAIVGFLL. The Periplasmic portion of the chain corresponds to 190 to 219; it reads GYVVPDVVRVFIDSGQTLPLLTRVLIGVSD. Residues 220 to 239 traverse the membrane as a helical segment; the sequence is WVKAWGALAFVAAIGGVIGF. Residues 240 to 376 are Cytoplasmic-facing; that stretch reads RYALRKDAFR…IGLMVGLFEP (137 aa). Residues 377–397 traverse the membrane as a helical segment; that stretch reads FMLIFMGAVVLVIVLAILLPI. Residues 398–405 lie on the Periplasmic side of the membrane; sequence LSLNQLVG.

The protein belongs to the GSP F family. Type II secretion system is composed of four main components: the outer membrane complex, the inner membrane complex, the cytoplasmic secretion ATPase and the periplasm-spanning pseudopilus. Homodimer. Interacts with XcpR/GspE and XcpY/GspL components.

The protein resides in the cell inner membrane. In terms of biological role, component of the type II secretion system inner membrane complex required for the energy-dependent secretion of extracellular factors such as proteases and toxins from the periplasm. The chain is Type II secretion system protein F (xcpS) from Pseudomonas aeruginosa (strain ATCC 15692 / DSM 22644 / CIP 104116 / JCM 14847 / LMG 12228 / 1C / PRS 101 / PAO1).